The following is a 756-amino-acid chain: Polyribonucleotide nucleotidyltransferase (756 aa).

The Mg(2+) site is built by Asp-532 and Asp-538. The KH domain occupies 598 to 657 (PRVTAIKVPVDKIGEVIGPKGKMINSITEQTGANISIEDDGTVFVGATDGPSAQAAIDMI). In terms of domain architecture, S1 motif spans 669–738 (GERFLGTVVK…ARGKISLIPV (70 aa)).

It belongs to the polyribonucleotide nucleotidyltransferase family. It depends on Mg(2+) as a cofactor.

The protein localises to the cytoplasm. It catalyses the reaction RNA(n+1) + phosphate = RNA(n) + a ribonucleoside 5'-diphosphate. Functionally, involved in mRNA degradation. Catalyzes the phosphorolysis of single-stranded polyribonucleotides processively in the 3'- to 5'-direction. The protein is Polyribonucleotide nucleotidyltransferase of Rhodococcus erythropolis (strain PR4 / NBRC 100887).